The chain runs to 540 residues: NXPE family member 1 (540 aa).

A signal peptide spans 1–22 (MLHKYLKLICLLAAICVLCIIS). Asn24, Asn42, Asn87, Asn155, Asn205, and Asn291 each carry an N-linked (GlcNAc...) asparagine glycan.

Belongs to the NXPE family. As to expression, intestine, and to a lesser extent in kidney.

It is found in the secreted. The sequence is that of NXPE family member 1 (NXPE1) from Oryctolagus cuniculus (Rabbit).